Reading from the N-terminus, the 142-residue chain is uncharacterized protein (142 aa).

Helical transmembrane passes span 75 to 97 (VFFR…YIVA) and 107 to 124 (LSIV…KLFY).

Its subcellular location is the cell membrane. This is an uncharacterized protein from Archaeoglobus fulgidus (strain ATCC 49558 / DSM 4304 / JCM 9628 / NBRC 100126 / VC-16).